A 147-amino-acid chain; its full sequence is Large ribosomal subunit protein bL9 (147 aa).

The protein belongs to the bacterial ribosomal protein bL9 family.

In terms of biological role, binds to the 23S rRNA. The sequence is that of Large ribosomal subunit protein bL9 from Citrifermentans bemidjiense (strain ATCC BAA-1014 / DSM 16622 / JCM 12645 / Bem) (Geobacter bemidjiensis).